Here is a 320-residue protein sequence, read N- to C-terminus: Aspartate carbamoyltransferase catalytic subunit (320 aa).

Carbamoyl phosphate contacts are provided by Arg-68 and Thr-69. L-aspartate is bound at residue Lys-96. Residues Arg-118, His-148, and Gln-151 each coordinate carbamoyl phosphate. Arg-181 and Arg-236 together coordinate L-aspartate. The carbamoyl phosphate site is built by Gly-277 and Pro-278.

This sequence belongs to the aspartate/ornithine carbamoyltransferase superfamily. ATCase family. Heterododecamer (2C3:3R2) of six catalytic PyrB chains organized as two trimers (C3), and six regulatory PyrI chains organized as three dimers (R2).

The enzyme catalyses carbamoyl phosphate + L-aspartate = N-carbamoyl-L-aspartate + phosphate + H(+). It participates in pyrimidine metabolism; UMP biosynthesis via de novo pathway; (S)-dihydroorotate from bicarbonate: step 2/3. Its function is as follows. Catalyzes the condensation of carbamoyl phosphate and aspartate to form carbamoyl aspartate and inorganic phosphate, the committed step in the de novo pyrimidine nucleotide biosynthesis pathway. The sequence is that of Aspartate carbamoyltransferase catalytic subunit from Variovorax paradoxus (strain S110).